A 439-amino-acid chain; its full sequence is Xylose isomerase (439 aa).

Active-site residues include His-101 and Asp-104. Mg(2+) contacts are provided by Glu-232, Glu-268, His-271, Asp-296, Asp-307, Asp-309, and Asp-339.

Belongs to the xylose isomerase family. Homotetramer. Mg(2+) is required as a cofactor.

It localises to the cytoplasm. It catalyses the reaction alpha-D-xylose = alpha-D-xylulofuranose. This Haemophilus influenzae (strain 86-028NP) protein is Xylose isomerase.